We begin with the raw amino-acid sequence, 203 residues long: Small ribosomal subunit protein uS4 (203 aa).

Residues 93 to 154 (RRFDNVVFRA…KSKNMDAVTE (62 aa)) enclose the S4 RNA-binding domain.

Belongs to the universal ribosomal protein uS4 family. As to quaternary structure, part of the 30S ribosomal subunit. Contacts protein S5. The interaction surface between S4 and S5 is involved in control of translational fidelity.

In terms of biological role, one of the primary rRNA binding proteins, it binds directly to 16S rRNA where it nucleates assembly of the body of the 30S subunit. With S5 and S12 plays an important role in translational accuracy. This Prosthecochloris aestuarii (strain DSM 271 / SK 413) protein is Small ribosomal subunit protein uS4.